Consider the following 317-residue polypeptide: Apolipoprotein E (317 aa).

A signal peptide spans 1-18; the sequence is MKVLWVALVITLLAGCQA. 8 consecutive repeat copies span residues 80–101, 102–123, 124–145, 146–167, 168–189, 190–211, 212–233, and 234–255. An 8 X 22 AA approximate tandem repeats region spans residues 80-255; that stretch reads VLMDETMKEV…HLEEMREQLD (176 aa). Methionine 143 is subject to Methionine sulfoxide. The LDL and other lipoprotein receptors binding stretch occupies residues 158–168; the sequence is HLRKLRKRLLR. Heparin is bound at residue 162 to 165; that stretch reads LRKR. Positions 210–290 are lipid-binding and lipoprotein association; the sequence is AATVGTLASQ…SWFEPLVEDM (81 aa). Heparin is bound at residue 229–236; sequence HQKLRGRV. The tract at residues 266–317 is homooligomerization; it reads TQMRLQAEAFQARLKSWFEPLVEDMQRQWAGLVEKVQLAMATSSTSAPSENH. A specificity for association with VLDL region spans residues 278–290; it reads RLKSWFEPLVEDM.

This sequence belongs to the apolipoprotein A1/A4/E family. Homotetramer. May interact with ABCA1; functionally associated with ABCA1 in the biogenesis of HDLs. May interact with APP/A4 amyloid-beta peptide; the interaction is extremely stable in vitro but its physiological significance is unclear. May interact with MAPT. May interact with MAP2. In the cerebrospinal fluid, interacts with secreted SORL1. Interacts with PMEL; this allows the loading of PMEL luminal fragment on ILVs to induce fibril nucleation. APOE exists as multiple glycosylated and sialylated glycoforms within cells and in plasma. The extent of glycosylation and sialylation are tissue and context specific. In terms of processing, glycated in plasma VLDL. Post-translationally, phosphorylated by FAM20C in the extracellular medium.

It is found in the secreted. The protein resides in the extracellular space. Its subcellular location is the extracellular matrix. The protein localises to the extracellular vesicle. It localises to the endosome. It is found in the multivesicular body. Functionally, APOE is an apolipoprotein, a protein associating with lipid particles, that mainly functions in lipoprotein-mediated lipid transport between organs via the plasma and interstitial fluids. APOE is a core component of plasma lipoproteins and is involved in their production, conversion and clearance. Apolipoproteins are amphipathic molecules that interact both with lipids of the lipoprotein particle core and the aqueous environment of the plasma. As such, APOE associates with chylomicrons, chylomicron remnants, very low density lipoproteins (VLDL) and intermediate density lipoproteins (IDL) but shows a preferential binding to high-density lipoproteins (HDL). It also binds a wide range of cellular receptors including the LDL receptor/LDLR and the very low-density lipoprotein receptor/VLDLR that mediate the cellular uptake of the APOE-containing lipoprotein particles. Finally, APOE also has a heparin-binding activity and binds heparan-sulfate proteoglycans on the surface of cells, a property that supports the capture and the receptor-mediated uptake of APOE-containing lipoproteins by cells. In Physeter macrocephalus (Sperm whale), this protein is Apolipoprotein E (APOE).